A 188-amino-acid chain; its full sequence is dCTP deaminase (188 aa).

Residues 111–116, 135–137, Gln-156, Tyr-170, Lys-179, and Gln-180 each bind dCTP; these read KSTYAR and TLE. Glu-137 acts as the Proton donor/acceptor in catalysis.

It belongs to the dCTP deaminase family. In terms of assembly, homotrimer.

It catalyses the reaction dCTP + H2O + H(+) = dUTP + NH4(+). It functions in the pathway pyrimidine metabolism; dUMP biosynthesis; dUMP from dCTP (dUTP route): step 1/2. Its function is as follows. Catalyzes the deamination of dCTP to dUTP. The sequence is that of dCTP deaminase from Orientia tsutsugamushi (strain Boryong) (Rickettsia tsutsugamushi).